A 128-amino-acid polypeptide reads, in one-letter code: Cystatin-2 (128 aa).

The signal sequence occupies residues 1 to 19; that stretch reads MSSFKVAVLLIAVYGASQG. The 88-residue stretch at 29–116 folds into the Cystatin domain; the sequence is QDPTEARFLE…CVAVIYHVPW (88 aa). Intrachain disulfides connect C84–C96 and C107–C127.

It belongs to the cystatin family. Widely expressed. Detected in salivary glands (at protein level), gut (at protein level), ovaries, and Malpighian tubules.

The protein resides in the secreted. Its function is as follows. Inhibitor of cysteine proteinases with broad specificity for mammalian cathepsins, including endopeptidases (cathepsins L and S) and exopeptidases (cathepsins B, C and H). Also inhibits endogenous cathepsin B-like and cathepsin C-like proteinases. Does not inhibit human legumain. May mimic specific host-derived cystatin(s) to interfere with its/their function in controlling cathepsin-mediated proteolysis. Affects the function of antigen-presenting mouse dendritic cells by reducing the production of the pro-inflammatory cytokines TNF and interleukin-12, and proliferation of antigen-specific CD4+ T-cells, suggesting it may suppress the host adaptive immune response. It is noteworthy that immunization of mice with this protein reduces O.moubata survival in infestation experiments. In Ornithodoros moubata (Soft tick), this protein is Cystatin-2.